The chain runs to 185 residues: Ribosome-recycling factor (185 aa).

It belongs to the RRF family.

The protein localises to the cytoplasm. Its function is as follows. Responsible for the release of ribosomes from messenger RNA at the termination of protein biosynthesis. May increase the efficiency of translation by recycling ribosomes from one round of translation to another. This is Ribosome-recycling factor from Geotalea daltonii (strain DSM 22248 / JCM 15807 / FRC-32) (Geobacter daltonii).